We begin with the raw amino-acid sequence, 137 residues long: Peptide methionine sulfoxide reductase MsrB (137 aa).

In terms of domain architecture, MsrB spans 7-129 (PTENIEKLSD…NSASLNFVDD (123 aa)). Zn(2+) contacts are provided by Cys-46, Cys-49, Cys-95, and Cys-98. The active-site Nucleophile is the Cys-118.

This sequence belongs to the MsrB Met sulfoxide reductase family. It depends on Zn(2+) as a cofactor.

The catalysed reaction is L-methionyl-[protein] + [thioredoxin]-disulfide + H2O = L-methionyl-(R)-S-oxide-[protein] + [thioredoxin]-dithiol. The polypeptide is Peptide methionine sulfoxide reductase MsrB (Yersinia pseudotuberculosis serotype O:1b (strain IP 31758)).